We begin with the raw amino-acid sequence, 703 residues long: Arylphorin subunit beta (703 aa).

An N-terminal signal peptide occupies residues 1–16 (MKTVIILAGLVALALG). Residues Asn-72 and Asn-211 are each glycosylated (N-linked (GlcNAc...) asparagine).

The protein belongs to the hemocyanin family. In terms of assembly, arylphorin is a hexamer of subunits alpha and beta. In terms of tissue distribution, fat body.

It localises to the secreted. The protein resides in the extracellular space. Arylphorin is a larval storage protein (LSP) which may serve as a storage protein used primarily as a source of aromatic amino acids for protein synthesis during metamorphosis. It is a constituent of the sclerotizing system of the cuticle, and serves as a carrier for ecdysteroid hormone. In Manduca sexta (Tobacco hawkmoth), this protein is Arylphorin subunit beta.